Here is a 449-residue protein sequence, read N- to C-terminus: UDP-N-acetylmuramoylalanine--D-glutamate ligase (449 aa).

Position 118-124 (118-124 (GTNGKTT)) interacts with ATP.

Belongs to the MurCDEF family.

It localises to the cytoplasm. It carries out the reaction UDP-N-acetyl-alpha-D-muramoyl-L-alanine + D-glutamate + ATP = UDP-N-acetyl-alpha-D-muramoyl-L-alanyl-D-glutamate + ADP + phosphate + H(+). It functions in the pathway cell wall biogenesis; peptidoglycan biosynthesis. Its function is as follows. Cell wall formation. Catalyzes the addition of glutamate to the nucleotide precursor UDP-N-acetylmuramoyl-L-alanine (UMA). The protein is UDP-N-acetylmuramoylalanine--D-glutamate ligase of Staphylococcus aureus (strain Mu3 / ATCC 700698).